The sequence spans 289 residues: GTPase Era (289 aa).

The region spanning 2-167 (KSGFVSLIGR…LREIAKLLPE (166 aa)) is the Era-type G domain. The G1 stretch occupies residues 10-17 (GRTNAGKS). 10-17 (GRTNAGKS) contacts GTP. The G2 stretch occupies residues 36 to 40 (NATRR). The segment at 57 to 60 (DTPG) is G3. GTP-binding positions include 57–61 (DTPGL) and 116–119 (TKTD). Residues 116-119 (TKTD) are G4. Residues 146–148 (VNI) are G5. The KH type-2 domain occupies 186–274 (YRDFILESVY…HLNLQIFVKK (89 aa)).

This sequence belongs to the TRAFAC class TrmE-Era-EngA-EngB-Septin-like GTPase superfamily. Era GTPase family. Monomer.

It localises to the cytoplasm. The protein resides in the cell inner membrane. In terms of biological role, an essential GTPase that binds both GDP and GTP, with rapid nucleotide exchange. Plays a role in 16S rRNA processing and 30S ribosomal subunit biogenesis and possibly also in cell cycle regulation and energy metabolism. This chain is GTPase Era, found in Campylobacter hominis (strain ATCC BAA-381 / DSM 21671 / CCUG 45161 / LMG 19568 / NCTC 13146 / CH001A).